Reading from the N-terminus, the 218-residue chain is Glycerol-3-phosphate acyltransferase 2 (218 aa).

The next 5 membrane-spanning stretches (helical) occupy residues 6-26 (YLLI…VLVG), 50-70 (VMGP…GTLA), 85-105 (LLLI…FLKF), 115-135 (AGVF…VFLP), and 159-179 (FWFH…LLFV).

This sequence belongs to the PlsY family. In terms of assembly, probably interacts with PlsX.

It localises to the cell membrane. The catalysed reaction is an acyl phosphate + sn-glycerol 3-phosphate = a 1-acyl-sn-glycero-3-phosphate + phosphate. It participates in lipid metabolism; phospholipid metabolism. Its function is as follows. Catalyzes the transfer of an acyl group from acyl-phosphate (acyl-PO(4)) to glycerol-3-phosphate (G3P) to form lysophosphatidic acid (LPA). This enzyme utilizes acyl-phosphate as fatty acyl donor, but not acyl-CoA or acyl-ACP. In Lactobacillus johnsonii (strain CNCM I-12250 / La1 / NCC 533), this protein is Glycerol-3-phosphate acyltransferase 2.